A 453-amino-acid polypeptide reads, in one-letter code: MNIVILAAGTGKRMRSALPKVLHPLAGRPLLSHVIATARTLQPSRLVVVVGHGAEQVQTAVAAPDVQFAVQAEQLGTGHAVRQALPLLDPAQPTLVLYGDVPLTRASTLRRLVDAAREGSYGILTVTLDDPTGYGRIVRDAAGFVTRIVEQKDASPEQLKIAEINTGIIVTPTGQLAMWLGALKNENAQGEYYLTDVVELAIEAGFDVVTSQPDDEWETLGVNSKAQLAELERIHQRTIADALLVDGVTLADPARVDVRGTLRCGRDVSIDVNCVFEGNVTLADNVTIGPNCVIRNASVGAGTRIDAFTHIDGAELGANTVIGPYARLRPGAQLADEAHVGNFVEVKNAVIGHGSKANHLTYIGDADIGARVNIGAGTITCNYDGANKFRTVIEDDVFVGSDTQLVAPVRVGRGVTIAAGTTIWKDVAEGVLALNEKTQTAKSGYVRPVKKKS.

Positions 1-225 (MNIVILAAGT…EWETLGVNSK (225 aa)) are pyrophosphorylase. UDP-N-acetyl-alpha-D-glucosamine contacts are provided by residues 6–9 (LAAG), lysine 20, glutamine 71, 76–77 (GT), 98–100 (YGD), glycine 135, glutamate 150, asparagine 165, and asparagine 223. Position 100 (aspartate 100) interacts with Mg(2+). Asparagine 223 lines the Mg(2+) pocket. The interval 226–246 (AQLAELERIHQRTIADALLVD) is linker. The N-acetyltransferase stretch occupies residues 247–453 (GVTLADPARV…GYVRPVKKKS (207 aa)). 2 residues coordinate UDP-N-acetyl-alpha-D-glucosamine: arginine 329 and lysine 347. Residue histidine 359 is the Proton acceptor of the active site. UDP-N-acetyl-alpha-D-glucosamine-binding residues include tyrosine 362 and asparagine 373. Acetyl-CoA contacts are provided by residues alanine 376, 382 to 383 (NY), serine 401, and alanine 419.

This sequence in the N-terminal section; belongs to the N-acetylglucosamine-1-phosphate uridyltransferase family. In the C-terminal section; belongs to the transferase hexapeptide repeat family. In terms of assembly, homotrimer. Mg(2+) serves as cofactor.

Its subcellular location is the cytoplasm. It carries out the reaction alpha-D-glucosamine 1-phosphate + acetyl-CoA = N-acetyl-alpha-D-glucosamine 1-phosphate + CoA + H(+). The catalysed reaction is N-acetyl-alpha-D-glucosamine 1-phosphate + UTP + H(+) = UDP-N-acetyl-alpha-D-glucosamine + diphosphate. It participates in nucleotide-sugar biosynthesis; UDP-N-acetyl-alpha-D-glucosamine biosynthesis; N-acetyl-alpha-D-glucosamine 1-phosphate from alpha-D-glucosamine 6-phosphate (route II): step 2/2. The protein operates within nucleotide-sugar biosynthesis; UDP-N-acetyl-alpha-D-glucosamine biosynthesis; UDP-N-acetyl-alpha-D-glucosamine from N-acetyl-alpha-D-glucosamine 1-phosphate: step 1/1. It functions in the pathway bacterial outer membrane biogenesis; LPS lipid A biosynthesis. In terms of biological role, catalyzes the last two sequential reactions in the de novo biosynthetic pathway for UDP-N-acetylglucosamine (UDP-GlcNAc). The C-terminal domain catalyzes the transfer of acetyl group from acetyl coenzyme A to glucosamine-1-phosphate (GlcN-1-P) to produce N-acetylglucosamine-1-phosphate (GlcNAc-1-P), which is converted into UDP-GlcNAc by the transfer of uridine 5-monophosphate (from uridine 5-triphosphate), a reaction catalyzed by the N-terminal domain. The sequence is that of Bifunctional protein GlmU from Burkholderia ambifaria (strain MC40-6).